The following is a 259-amino-acid chain: HTH-type transcriptional regulator Rv1931c (259 aa).

Basic residues predominate over residues 104–121 (SHRRHRPRAGTGRRRPRH). Residues 104-170 (SHRRHRPRAG…GAGGHRGRAG (67 aa)) form a disordered region. The HTH araC/xylS-type domain occupies 174–257 (RIGELAQRAA…GISPDQYRKA (84 aa)). DNA-binding regions (H-T-H motif) lie at residues 176 to 197 (GELA…SDEV) and 224 to 247 (VVAI…IRRV).

Controls the expression of genes important for virulence. The chain is HTH-type transcriptional regulator Rv1931c from Mycobacterium tuberculosis (strain ATCC 25618 / H37Rv).